The chain runs to 341 residues: MALKVYYDKDCDLGLIQKKKVAVIGFGSQGHAHAENLRDSGVEVIIGLYRGGSSWVKAEAKGFKVLEVSEATKVADVIMILIPDELQADVFAKDILPSLSEDKIIAFGHGFNIHFGQIKAPKGVGVIMVAPKAPGHTVRSEFVKGGGIPDLIAVEQDTSRGDAKAIALSYASAIGGGRSGIIETTFKDETETDLFGEQAVLCGGVTSLVKAGFETLVEAGYPEEMAYFECLHELKLIVDLIYEGGLANMRYSISNTAEYGDMVSGPRVINEESKKAMKQILKDIQEGRFAKDFILERKAGYARMNAERKNLANHKIEQVGGRLRAMMPWIGANKLVDKERN.

The KARI N-terminal Rossmann domain maps to Leu-3–Thr-184. NADP(+) contacts are provided by residues Phe-26 to Gln-29, Ser-54, and Asp-84 to Gln-87. His-109 is an active-site residue. Position 135 (Gly-135) interacts with NADP(+). The 146-residue stretch at Thr-185–Ile-330 folds into the KARI C-terminal knotted domain. Positions 193, 197, 229, and 233 each coordinate Mg(2+). A substrate-binding site is contributed by Ser-254.

It belongs to the ketol-acid reductoisomerase family. It depends on Mg(2+) as a cofactor.

It catalyses the reaction (2R)-2,3-dihydroxy-3-methylbutanoate + NADP(+) = (2S)-2-acetolactate + NADPH + H(+). The catalysed reaction is (2R,3R)-2,3-dihydroxy-3-methylpentanoate + NADP(+) = (S)-2-ethyl-2-hydroxy-3-oxobutanoate + NADPH + H(+). It functions in the pathway amino-acid biosynthesis; L-isoleucine biosynthesis; L-isoleucine from 2-oxobutanoate: step 2/4. Its pathway is amino-acid biosynthesis; L-valine biosynthesis; L-valine from pyruvate: step 2/4. In terms of biological role, involved in the biosynthesis of branched-chain amino acids (BCAA). Catalyzes an alkyl-migration followed by a ketol-acid reduction of (S)-2-acetolactate (S2AL) to yield (R)-2,3-dihydroxy-isovalerate. In the isomerase reaction, S2AL is rearranged via a Mg-dependent methyl migration to produce 3-hydroxy-3-methyl-2-ketobutyrate (HMKB). In the reductase reaction, this 2-ketoacid undergoes a metal-dependent reduction by NADPH to yield (R)-2,3-dihydroxy-isovalerate. The sequence is that of Ketol-acid reductoisomerase (NADP(+)) from Helicobacter hepaticus (strain ATCC 51449 / 3B1).